The chain runs to 438 residues: Trigger factor (438 aa).

The PPIase FKBP-type domain maps to 160-245 (DDKVTIDFVG…VKKIQQAELP (86 aa)).

It belongs to the FKBP-type PPIase family. Tig subfamily.

It is found in the cytoplasm. The enzyme catalyses [protein]-peptidylproline (omega=180) = [protein]-peptidylproline (omega=0). Its function is as follows. Involved in protein export. Acts as a chaperone by maintaining the newly synthesized protein in an open conformation. Functions as a peptidyl-prolyl cis-trans isomerase. The sequence is that of Trigger factor from Francisella tularensis subsp. tularensis (strain FSC 198).